We begin with the raw amino-acid sequence, 151 residues long: Large ribosomal subunit protein bL9 (151 aa).

Belongs to the bacterial ribosomal protein bL9 family.

In terms of biological role, binds to the 23S rRNA. The protein is Large ribosomal subunit protein bL9 of Chlorobium luteolum (strain DSM 273 / BCRC 81028 / 2530) (Pelodictyon luteolum).